The chain runs to 294 residues: 4-hydroxy-tetrahydrodipicolinate synthase (294 aa).

T47 contacts pyruvate. The active-site Proton donor/acceptor is the Y135. K163 (schiff-base intermediate with substrate) is an active-site residue. A pyruvate-binding site is contributed by I206.

Belongs to the DapA family. In terms of assembly, homodimer.

The protein localises to the cytoplasm. The catalysed reaction is L-aspartate 4-semialdehyde + pyruvate = (2S,4S)-4-hydroxy-2,3,4,5-tetrahydrodipicolinate + H2O + H(+). It functions in the pathway amino-acid biosynthesis; L-lysine biosynthesis via DAP pathway; (S)-tetrahydrodipicolinate from L-aspartate: step 3/4. In terms of biological role, catalyzes the condensation of (S)-aspartate-beta-semialdehyde [(S)-ASA] and pyruvate to 4-hydroxy-tetrahydrodipicolinate (HTPA). This chain is 4-hydroxy-tetrahydrodipicolinate synthase, found in Staphylococcus epidermidis (strain ATCC 35984 / DSM 28319 / BCRC 17069 / CCUG 31568 / BM 3577 / RP62A).